We begin with the raw amino-acid sequence, 435 residues long: Serine--tRNA ligase (435 aa).

The segment at Gln-41 to Ala-70 is disordered. Residues Ala-49–Ile-58 are compositionally biased toward polar residues. Thr-242 to Glu-244 is a binding site for L-serine. Arg-273–Glu-275 contributes to the ATP binding site. Glu-296 contributes to the L-serine binding site. Glu-360–Ser-363 serves as a coordination point for ATP. Ser-396 is a binding site for L-serine.

The protein belongs to the class-II aminoacyl-tRNA synthetase family. Type-1 seryl-tRNA synthetase subfamily. In terms of assembly, homodimer. The tRNA molecule binds across the dimer.

It localises to the cytoplasm. It catalyses the reaction tRNA(Ser) + L-serine + ATP = L-seryl-tRNA(Ser) + AMP + diphosphate + H(+). The catalysed reaction is tRNA(Sec) + L-serine + ATP = L-seryl-tRNA(Sec) + AMP + diphosphate + H(+). It functions in the pathway aminoacyl-tRNA biosynthesis; selenocysteinyl-tRNA(Sec) biosynthesis; L-seryl-tRNA(Sec) from L-serine and tRNA(Sec): step 1/1. Catalyzes the attachment of serine to tRNA(Ser). Is also able to aminoacylate tRNA(Sec) with serine, to form the misacylated tRNA L-seryl-tRNA(Sec), which will be further converted into selenocysteinyl-tRNA(Sec). The polypeptide is Serine--tRNA ligase (Aliivibrio fischeri (strain ATCC 700601 / ES114) (Vibrio fischeri)).